The following is a 163-amino-acid chain: Nucleotide-binding protein YajQ (163 aa).

This sequence belongs to the YajQ family.

Functionally, nucleotide-binding protein. This is Nucleotide-binding protein YajQ from Salmonella typhi.